Reading from the N-terminus, the 504-residue chain is UDP-N-acetylmuramoylalanine--D-glutamate ligase (504 aa).

132–138 (GTNGKTT) is an ATP binding site. Positions 286-295 (DRDASDEPAP) are enriched in basic and acidic residues. A disordered region spans residues 286 to 305 (DRDASDEPAPKRRRKNEVAT).

This sequence belongs to the MurCDEF family.

The protein localises to the cytoplasm. The catalysed reaction is UDP-N-acetyl-alpha-D-muramoyl-L-alanine + D-glutamate + ATP = UDP-N-acetyl-alpha-D-muramoyl-L-alanyl-D-glutamate + ADP + phosphate + H(+). It participates in cell wall biogenesis; peptidoglycan biosynthesis. Functionally, cell wall formation. Catalyzes the addition of glutamate to the nucleotide precursor UDP-N-acetylmuramoyl-L-alanine (UMA). In Paraburkholderia xenovorans (strain LB400), this protein is UDP-N-acetylmuramoylalanine--D-glutamate ligase.